A 105-amino-acid polypeptide reads, in one-letter code: Met repressor (105 aa).

Belongs to the MetJ family. Homodimer.

The protein localises to the cytoplasm. This regulatory protein, when combined with SAM (S-adenosylmethionine) represses the expression of the methionine regulon and of enzymes involved in SAM synthesis. In Actinobacillus pleuropneumoniae serotype 7 (strain AP76), this protein is Met repressor.